The primary structure comprises 888 residues: 3-hydroxy-3-methylglutaryl-coenzyme A reductase (888 aa).

The Cytoplasmic portion of the chain corresponds to 1-9; it reads MLSRLFRMH. Residues 10–39 traverse the membrane as a helical segment; sequence GLFVASHPWEVIVGTVTLTICMMSMNMFTG. Residues 40–56 lie on the Lumenal side of the membrane; the sequence is NDKICGWNYECPKFEED. The chain crosses the membrane as a helical span at residues 57-78; the sequence is VLSSDIIILTITRCIAILYIYF. Positions 61–218 constitute an SSD domain; the sequence is DIIILTITRC…MTFFPACVSL (158 aa). The INSIG-binding motif signature appears at 75–78; sequence YIYF. Residues 79–89 are Cytoplasmic-facing; sequence QFQNLRQLGSK. A Glycyl lysine isopeptide (Lys-Gly) (interchain with G-Cter in ubiquitin) cross-link involves residue K89. The helical transmembrane segment at 90 to 114 threads the bilayer; that stretch reads YILGIAGLFTIFSSFVFSTVVIHFL. The Lumenal portion of the chain corresponds to 115–123; sequence DKELTGLNE. The helical transmembrane segment at 124–149 threads the bilayer; sequence ALPFFLLLIDLSRASALAKFALSSNS. The Cytoplasmic segment spans residues 150–159; that stretch reads QDEVRENIAR. Residues 160–187 traverse the membrane as a helical segment; it reads GMAILGPTFTLDALVECLVIGVGTMSGV. Topologically, residues 188–191 are lumenal; the sequence is RQLE. The chain crosses the membrane as a helical span at residues 192–220; sequence IMCCFGCMSVLANYFVFMTFFPACVSLVL. The Cytoplasmic segment spans residues 221-248; it reads ELSRESREGRPIWQLSHFARVLEEEENK. K248 participates in a covalent cross-link: Glycyl lysine isopeptide (Lys-Gly) (interchain with G-Cter in ubiquitin). A helical membrane pass occupies residues 249–275; the sequence is PNPVTQRVKMIMSLGLVLVHAHSRWIA. At 276-314 the chain is on the lumenal side; the sequence is DPSPQNSTADNSKVSLGLDENVSKRIEPSVSLWQFYLSK. N281 and N296 each carry an N-linked (GlcNAc...) asparagine glycan. A helical transmembrane segment spans residues 315–339; that stretch reads MISMDIEQVITLSLALLLAVKYIFF. The Cytoplasmic segment spans residues 340–888; sequence EQAETESTLS…LEGACTKKAA (549 aa). Catalysis depends on charge relay system residues E559, K691, and D767. Residue H866 is the Proton donor of the active site. S872 is modified (phosphoserine; by AMPK).

This sequence belongs to the HMG-CoA reductase family. As to quaternary structure, homotetramer. Homodimer. Interacts (via its SSD) with INSIG1; the interaction, accelerated by sterols, leads to the recruitment of HMGCR to AMFR/gp78 for its ubiquitination by the sterol-mediated ERAD pathway. Interacts with UBIAD1. Undergoes sterol-mediated ubiquitination and ER-associated degradation (ERAD). Accumulation of sterols in the endoplasmic reticulum (ER) membrane, triggers binding of the reductase to the ER membrane protein INSIG1 or INSIG2. The INSIG1 binding leads to the recruitment of the ubiquitin ligase, AMFR/gp78, RNF139 or RNF145, initiating ubiquitination of the reductase. The ubiquitinated reductase is then extracted from the ER membrane and delivered to cytosolic 26S proteosomes by a mechanism probably mediated by the ATPase Valosin-containing protein VCP/p97. The INSIG2-binding leads to the recruitment of the ubiquitin ligase RNF139, initiating ubiquitination of the reductase. Lys-248 is the main site of ubiquitination. Ubiquitination is enhanced by the presence of a geranylgeranylated protein. Post-translationally, N-glycosylated. Deglycosylated by NGLY1 on release from the endoplasmic reticulum (ER) in a sterol-mediated manner. In terms of processing, phosphorylated. Phosphorylation at Ser-872 reduces the catalytic activity.

It localises to the endoplasmic reticulum membrane. The protein localises to the peroxisome membrane. The enzyme catalyses (R)-mevalonate + 2 NADP(+) + CoA = (3S)-3-hydroxy-3-methylglutaryl-CoA + 2 NADPH + 2 H(+). It participates in metabolic intermediate biosynthesis; (R)-mevalonate biosynthesis; (R)-mevalonate from acetyl-CoA: step 3/3. Regulated by a negative feedback mechanism through sterols and non-sterol metabolites derived from mevalonate. Phosphorylation at Ser-872 down-regulates the catalytic activity. Functionally, catalyzes the conversion of (3S)-hydroxy-3-methylglutaryl-CoA (HMG-CoA) to mevalonic acid, the rate-limiting step in the synthesis of cholesterol and other isoprenoids, thus plays a critical role in cellular cholesterol homeostasis. This Oryctolagus cuniculus (Rabbit) protein is 3-hydroxy-3-methylglutaryl-coenzyme A reductase (HMGCR).